The sequence spans 232 residues: Flagellar L-ring protein (232 aa).

A signal peptide spans 1 to 21 (MQKNAAHTYAISSLLVLSLTG). C22 carries the N-palmitoyl cysteine lipid modification. Residue C22 is the site of S-diacylglycerol cysteine attachment.

Belongs to the FlgH family. The basal body constitutes a major portion of the flagellar organelle and consists of four rings (L,P,S, and M) mounted on a central rod.

The protein localises to the cell outer membrane. It is found in the bacterial flagellum basal body. Assembles around the rod to form the L-ring and probably protects the motor/basal body from shearing forces during rotation. This Shigella dysenteriae serotype 1 (strain Sd197) protein is Flagellar L-ring protein.